A 415-amino-acid chain; its full sequence is Corticotropin-releasing factor receptor 1 (415 aa).

The first 23 residues, 1-23 (MGRRPQLRLVKALLLLGLNSISA), serve as a signal peptide directing secretion. Residues 24–111 (SLQDQHCESL…CQEILSEGEK (88 aa)) are Extracellular-facing. Cystine bridges form between C30-C54, C44-C87, and C68-C102. N-linked (GlcNAc...) asparagine glycosylation is found at N38, N45, N51, N78, N90, and N98. An important for peptide agonist binding region spans residues 99-108 (HSECQEILSE). Residues 112–142 (SKAHYHIAVIINYLGHCISLAALLVAFVLFL) form a helical membrane-spanning segment. At 143-149 (RLRSIRC) the chain is on the cytoplasmic side. A helical membrane pass occupies residues 150–174 (VRNIIHWNLISAFILRNATWFVVQL). The Extracellular segment spans residues 175 to 189 (TMSPEVHQSNVGWCR). C188 and C258 are joined by a disulfide. A helical membrane pass occupies residues 190 to 218 (LVTAAYNYFHVTNFFWMFGEGCYLHTAVV). Residues 219–225 (LTYSTDR) are Cytoplasmic-facing. The helical transmembrane segment at 226–253 (LRKWMFICIGWGVPFPIIVAWAIGKLYY) threads the bilayer. The Extracellular portion of the chain corresponds to 254–269 (DNEKCWFGKRPGVYTD). Residues 270-295 (YIYQGPMILVLLINFIFLFNIVRILM) traverse the membrane as a helical segment. Residues 280 to 290 (LLINFIFLFNI) are important for antagonist binding. Over 296–306 (TKLRASTTSET) the chain is Cytoplasmic. S301 bears the Phosphoserine; by PKA mark. A helical membrane pass occupies residues 307 to 331 (IQYRKAVKATLVLLPLLGITYMLFF). The Extracellular segment spans residues 332-338 (VNPGEDE). The chain crosses the membrane as a helical span at residues 339-368 (VSRVVFIYFNSFLESFQGFFVSVFYCFLNS). Topologically, residues 369–415 (EVRSAIRKRWHRWQDKHSIRARVARAMSIPTSPTRVSFHSIKQSTAV) are cytoplasmic.

Belongs to the G-protein coupled receptor 2 family. As to quaternary structure, heterodimer; heterodimerizes with GPER1. Interacts (via N-terminal extracellular domain) with CRH and UCN. Interacts with DLG1; this inhibits endocytosis of CRHR1 after agonist binding. C-terminal Ser or Thr residues may be phosphorylated. Post-translationally, phosphorylation at Ser-301 by PKA prevents maximal coupling to Gq-protein, and thereby negatively regulates downstream signaling.

The protein resides in the cell membrane. It localises to the endosome. In terms of biological role, G-protein coupled receptor for CRH (corticotropin-releasing factor) and UCN (urocortin). Has high affinity for CRH and UCN. Ligand binding causes a conformation change that triggers signaling via guanine nucleotide-binding proteins (G proteins) and down-stream effectors, such as adenylate cyclase. Promotes the activation of adenylate cyclase, leading to increased intracellular cAMP levels. Inhibits the activity of the calcium channel CACNA1H. Required for normal embryonic development of the adrenal gland and for normal hormonal responses to stress. Plays a role in the response to anxiogenic stimuli. The chain is Corticotropin-releasing factor receptor 1 (CRHR1) from Ovis aries (Sheep).